The sequence spans 315 residues: HTH-type transcriptional regulator TreR (315 aa).

In terms of domain architecture, HTH lacI-type spans 5–59 (LTIKDIARLSGVGKSTVSRVLNNESGVSERTRERVEAVMNQHGFSPSRSARAMRG). A DNA-binding region (H-T-H motif) is located at residues 7 to 26 (IKDIARLSGVGKSTVSRVLN). Alpha,alpha-trehalose 6-phosphate is bound by residues 71 to 77 (RLDSLSE), glycine 126, arginine 147, 187 to 190 (DITT), arginine 194, threonine 242, and tyrosine 284.

As to quaternary structure, homodimer.

In terms of biological role, repressor of the treBC operon. It is able to bind trehalose-6-phosphate. This Salmonella typhimurium (strain LT2 / SGSC1412 / ATCC 700720) protein is HTH-type transcriptional regulator TreR (treR).